The following is a 181-amino-acid chain: ATP-dependent protease subunit HslV (181 aa).

Threonine 7 is an active-site residue. Residues alanine 166, cysteine 169, and threonine 172 each coordinate Na(+).

The protein belongs to the peptidase T1B family. HslV subfamily. A double ring-shaped homohexamer of HslV is capped on each side by a ring-shaped HslU homohexamer. The assembly of the HslU/HslV complex is dependent on binding of ATP.

It localises to the cytoplasm. The enzyme catalyses ATP-dependent cleavage of peptide bonds with broad specificity.. Allosterically activated by HslU binding. Its function is as follows. Protease subunit of a proteasome-like degradation complex believed to be a general protein degrading machinery. This is ATP-dependent protease subunit HslV from Anaeromyxobacter dehalogenans (strain 2CP-1 / ATCC BAA-258).